The chain runs to 218 residues: Pyridoxine/pyridoxamine 5'-phosphate oxidase (218 aa).

Residues 14-17 (RREY) and Lys72 contribute to the substrate site. FMN is bound by residues 67–72 (RIVLLK), 82–83 (YT), Arg88, Lys89, and Gln111. Substrate is bound by residues Tyr129, Arg133, and Ser137. FMN contacts are provided by residues 146-147 (QS) and Trp191. Position 197–199 (197–199 (RLH)) interacts with substrate. Arg201 provides a ligand contact to FMN.

This sequence belongs to the pyridoxamine 5'-phosphate oxidase family. In terms of assembly, homodimer. FMN serves as cofactor.

It carries out the reaction pyridoxamine 5'-phosphate + O2 + H2O = pyridoxal 5'-phosphate + H2O2 + NH4(+). It catalyses the reaction pyridoxine 5'-phosphate + O2 = pyridoxal 5'-phosphate + H2O2. It participates in cofactor metabolism; pyridoxal 5'-phosphate salvage; pyridoxal 5'-phosphate from pyridoxamine 5'-phosphate: step 1/1. The protein operates within cofactor metabolism; pyridoxal 5'-phosphate salvage; pyridoxal 5'-phosphate from pyridoxine 5'-phosphate: step 1/1. Catalyzes the oxidation of either pyridoxine 5'-phosphate (PNP) or pyridoxamine 5'-phosphate (PMP) into pyridoxal 5'-phosphate (PLP). This is Pyridoxine/pyridoxamine 5'-phosphate oxidase from Escherichia coli (strain 55989 / EAEC).